We begin with the raw amino-acid sequence, 484 residues long: Serine/arginine-rich splicing factor 11 (484 aa).

Positions 1–33 are disordered; sequence MSNTTVVPSTAGPGPSGGPGGGGGGGGGGGGTE. Position 2 is an N-acetylserine (S2). Over residues 14 to 32 the composition is skewed to gly residues; the sequence is GPSGGPGGGGGGGGGGGGT. Residues 33–113 form the RRM domain; that stretch reads EVIQVTNVSP…ALIVVPYAEG (81 aa). Residue K197 forms a Glycyl lysine isopeptide (Lys-Gly) (interchain with G-Cter in SUMO2) linkage. S207 is modified (phosphoserine). K211 participates in a covalent cross-link: Glycyl lysine isopeptide (Lys-Gly) (interchain with G-Cter in SUMO2). The residue at position 212 (S212) is a Phosphoserine. The interval 233–484 is disordered; the sequence is ISAAIEPDKK…HHEEDMDMSD (252 aa). Residues 244–308 are compositionally biased toward basic residues; the sequence is EKRRHSRSRS…ERGRRSRSTS (65 aa). 10 tandem repeats follow at residues 247-255, 258-265, 267-274, 275-282, 285-292, 293-300, 302-309, 321-328, 334-341, and 346-353. Residues 247 to 353 are 10 X 8 AA approximate repeats of R-R-S-R-S-R-S-R; sequence RHSRSRSRSR…RRRRSRSGTR (107 aa). Positions 309-320 are enriched in basic and acidic residues; the sequence is KTRDKKKEDKEK. S323 is modified (phosphoserine). T325 is modified (phosphothreonine). Positions 334–379 are enriched in basic residues; that stretch reads RRSRSASRERRRRRSRSGTRSPKKPRSPKRKLSRSPSPRRHKKEKK. 3 stretches are compositionally biased toward basic and acidic residues: residues 380 to 395, 402 to 424, and 433 to 478; these read KDKD…ERST, KDKE…VTRD, and DSEK…HHEE. A phosphoserine mark is found at S414 and S434. At T447 the chain carries Phosphothreonine. Phosphoserine occurs at positions 449, 456, 464, and 483.

Belongs to the splicing factor SR family. Interacts with PUF60.

The protein resides in the nucleus. Its function is as follows. May function in pre-mRNA splicing. This is Serine/arginine-rich splicing factor 11 (SRSF11) from Homo sapiens (Human).